An 89-amino-acid chain; its full sequence is Small ribosomal subunit protein uS14 (89 aa).

This sequence belongs to the universal ribosomal protein uS14 family. As to quaternary structure, part of the 30S ribosomal subunit. Contacts proteins S3 and S10.

Its function is as follows. Binds 16S rRNA, required for the assembly of 30S particles and may also be responsible for determining the conformation of the 16S rRNA at the A site. The polypeptide is Small ribosomal subunit protein uS14 (Exiguobacterium sibiricum (strain DSM 17290 / CCUG 55495 / CIP 109462 / JCM 13490 / 255-15)).